The chain runs to 268 residues: MLRIAGRKLSSSAAARSSSAFFTRNPFTFTDDSSSPTRSPSPTSLASQFLDQFRGFSSNSVSPAHQTGLVSDLPATVAAIKNPSSKIVYDDSNHERYPPGDPSKRAFAYFVLTGGRFVYASLVRLLILKFVLSMSASKDVLALASLEVDLSSIEPGTTVTVKWRGKPVFIRRRTDEDINLANSVDLGSLRDPQQDAERVKNPEWLVVIGVCTHLGCIPLPNAGDFGGWFCPCHGSHYDISGRIRKGPAPYNLEVPTYSFMEENKLLIG.

Residues 1 to 56 constitute a mitochondrion transit peptide; sequence MLRIAGRKLSSSAAARSSSAFFTRNPFTFTDDSSSPTRSPSPTSLASQFLDQFRGF. Over 57–105 the chain is Mitochondrial matrix; it reads SSNSVSPAHQTGLVSDLPATVAAIKNPSSKIVYDDSNHERYPPGDPSKR. Residues 106–128 traverse the membrane as a helical segment; sequence AFAYFVLTGGRFVYASLVRLLIL. Topologically, residues 129–268 are mitochondrial intermembrane; it reads KFVLSMSASK…FMEENKLLIG (140 aa). In terms of domain architecture, Rieske spans 178–266; it reads INLANSVDLG…YSFMEENKLL (89 aa). The [2Fe-2S] cluster site is built by Cys-211, His-213, Cys-230, and His-233. An intrachain disulfide couples Cys-216 to Cys-232.

The protein belongs to the Rieske iron-sulfur protein family. As to quaternary structure, component of the ubiquinol-cytochrome c oxidoreductase (cytochrome b-c1 complex, complex III, CIII), a multisubunit enzyme composed of 3 respiratory subunits cytochrome b, cytochrome c1 and Rieske protein, 2 core protein subunits, and several low-molecular weight protein subunits. The complex exists as an obligatory dimer and forms supercomplexes (SCs) in the inner mitochondrial membrane with cytochrome c oxidase (complex IV, CIV). It depends on [2Fe-2S] cluster as a cofactor. High levels are seen in the flowers while a low level expression is seen in the roots, leaves and stems.

It localises to the mitochondrion inner membrane. The catalysed reaction is a quinol + 2 Fe(III)-[cytochrome c](out) = a quinone + 2 Fe(II)-[cytochrome c](out) + 2 H(+)(out). Component of the ubiquinol-cytochrome c oxidoreductase, a multisubunit transmembrane complex that is part of the mitochondrial electron transport chain which drives oxidative phosphorylation. The respiratory chain contains 3 multisubunit complexes succinate dehydrogenase (complex II, CII), ubiquinol-cytochrome c oxidoreductase (cytochrome b-c1 complex, complex III, CIII) and cytochrome c oxidase (complex IV, CIV), that cooperate to transfer electrons derived from NADH and succinate to molecular oxygen, creating an electrochemical gradient over the inner membrane that drives transmembrane transport and the ATP synthase. The cytochrome b-c1 complex catalyzes electron transfer from ubiquinol to cytochrome c, linking this redox reaction to translocation of protons across the mitochondrial inner membrane, with protons being carried across the membrane as hydrogens on the quinol. In the process called Q cycle, 2 protons are consumed from the matrix, 4 protons are released into the intermembrane space and 2 electrons are passed to cytochrome c. The Rieske protein is a catalytic core subunit containing a [2Fe-2S] iron-sulfur cluster. It cycles between 2 conformational states during catalysis to transfer electrons from the quinol bound in the Q(0) site in cytochrome b to cytochrome c1. This Nicotiana tabacum (Common tobacco) protein is Cytochrome b-c1 complex subunit Rieske-5, mitochondrial.